Here is a 115-residue protein sequence, read N- to C-terminus: V-type proton ATPase subunit G (115 aa).

It belongs to the V-ATPase G subunit family. As to quaternary structure, V-ATPase is a heteromultimeric enzyme composed of a peripheral catalytic V1 complex (components A to H) attached to an integral membrane V0 proton pore complex (components: a, c, c', c'', d, e, f and VOA1).

It is found in the vacuole membrane. Functionally, subunit of the V1 complex of vacuolar(H+)-ATPase (V-ATPase), a multisubunit enzyme composed of a peripheral complex (V1) that hydrolyzes ATP and a membrane integral complex (V0) that translocates protons. V-ATPase is responsible for acidifying and maintaining the pH of intracellular compartments. The protein is V-type proton ATPase subunit G (vma-10) of Neurospora crassa (strain ATCC 24698 / 74-OR23-1A / CBS 708.71 / DSM 1257 / FGSC 987).